The following is a 138-amino-acid chain: Probable non-specific lipid-transfer protein 1 (138 aa).

An N-terminal signal peptide occupies residues 1–36 (MRTVSARSSVALVVIVAAVLVWTSSASVAPAPAPGS). 4 disulfide bridges follow: Cys40/Cys88, Cys50/Cys65, Cys66/Cys111, and Cys86/Cys127.

Belongs to the plant LTP family.

Its function is as follows. Plant non-specific lipid-transfer proteins transfer phospholipids as well as galactolipids across membranes. May play a role in wax or cutin deposition in the cell walls of expanding epidermal cells and certain secretory tissues. This chain is Probable non-specific lipid-transfer protein 1, found in Parietaria judaica (Pellitory-of-the-wall).